The chain runs to 296 residues: Glycine N-acyltransferase (296 aa).

An N6-acetyllysine; alternate mark is found at lysine 16, lysine 127, and lysine 141. Residues lysine 16, lysine 127, and lysine 141 each carry the N6-succinyllysine; alternate modification. N6-acetyllysine is present on lysine 159. Lysine 169 is subject to N6-succinyllysine. An N6-acetyllysine; alternate mark is found at lysine 183 and lysine 256. N6-succinyllysine; alternate is present on residues lysine 183 and lysine 256.

This sequence belongs to the glycine N-acyltransferase family.

It is found in the mitochondrion. It carries out the reaction an acyl-CoA + glycine = an N-acylglycine + CoA + H(+). The catalysed reaction is benzoyl-CoA + glycine = N-benzoylglycine + CoA + H(+). Its function is as follows. Mitochondrial acyltransferase which transfers an acyl group to the N-terminus of glycine and glutamine, although much less efficiently. Can conjugate a multitude of substrates to form a variety of N-acylglycines, thereby detoxify xenobiotics, such as benzoic acid or salicylic acid, and endogenous organic acids, such as isovaleric acid. The sequence is that of Glycine N-acyltransferase (GLYAT) from Pongo abelii (Sumatran orangutan).